Reading from the N-terminus, the 878-residue chain is Protein translocase subunit SecA (878 aa).

ATP is bound by residues glutamine 81, 99-103 (GEGKT), and aspartate 489.

This sequence belongs to the SecA family.

The protein resides in the plastid. It is found in the chloroplast stroma. Its subcellular location is the chloroplast thylakoid membrane. The catalysed reaction is ATP + H2O + cellular proteinSide 1 = ADP + phosphate + cellular proteinSide 2.. Functionally, has a central role in coupling the hydrolysis of ATP to the transfer of proteins across the thylakoid membrane. This Thalassiosira pseudonana (Marine diatom) protein is Protein translocase subunit SecA.